A 113-amino-acid chain; its full sequence is MSNIQIPLIFTDAAAKKVKSLIEGEDNPNLRLRVYITGGGCSGFQYGFTFDDQINEGDLTIENQNVGLVVDPMSLQYLIGGTVDYTEGLDGSRFVVQNPNASSTCGCGSSFSI.

Residues C41, C105, and C107 each coordinate iron-sulfur cluster.

Belongs to the HesB/IscA family. Homodimer. Iron-sulfur cluster is required as a cofactor.

Functionally, required for insertion of 4Fe-4S clusters for at least IspG. The polypeptide is Iron-sulfur cluster insertion protein ErpA (Actinobacillus pleuropneumoniae serotype 5b (strain L20)).